Here is a 904-residue protein sequence, read N- to C-terminus: E3 SUMO-protein ligase SIZ1 (904 aa).

Residues Met1–Pro13 show a composition bias toward acidic residues. The disordered stretch occupies residues Met1–Asn21. Positions Met34–Leu68 constitute an SAP domain. Positions Met122–Phe170 are disordered. Positions Thr127–Ile136 are enriched in polar residues. The residue at position 132 (Ser132) is a Phosphoserine. The segment covering Arg137–Arg154 has biased composition (low complexity). The PINIT domain maps to Asp162–Ile314. The SP-RING-type zinc-finger motif lies at Glu344–Gln431. Cys377, His379, Cys400, and Cys403 together coordinate Zn(2+). Disordered regions lie at residues Ile443–Arg584, Ser596–Pro616, and Ser672–Ser733. Acidic residues predominate over residues Leu444 to Ser454. The segment covering Asn501–Asn511 has biased composition (basic and acidic residues). Positions Asp512 to Asn553 are enriched in low complexity. 3 stretches are compositionally biased toward polar residues: residues Arg561 to Met574, Ser596 to Ser611, and Ser672 to Arg683. Residues Asn684 to Leu699 are compositionally biased toward low complexity. Over residues Ile721–Ser733 the composition is skewed to polar residues. Ser794 is modified (phosphoserine). The required for localization at the bud neck stretch occupies residues Ser794–Gly904. Residues Arg877–Thr894 show a composition bias toward polar residues. Positions Arg877–Gly904 are disordered.

This sequence belongs to the PIAS family. As to quaternary structure, interacts with UBC9 and CDC3. Post-translationally, phosphorylated in early M-phase. In terms of processing, autosumoylated upon ethanol stress.

The protein resides in the cytoplasm. Its subcellular location is the nucleus. The protein localises to the bud neck. The protein operates within protein modification; protein sumoylation. In terms of biological role, acts as an E3 ligase mediating SUMO/Smt3 attachment to septins and PCNA. May be involved in chromosome maintenance. The chain is E3 SUMO-protein ligase SIZ1 (SIZ1) from Saccharomyces cerevisiae (strain ATCC 204508 / S288c) (Baker's yeast).